A 715-amino-acid chain; its full sequence is Fatty acid oxidation complex subunit alpha (715 aa).

The enoyl-CoA hydratase/isomerase stretch occupies residues 1–190 (MIYEGKAITV…KVGAVDAVVA (190 aa)). Asp297 serves as a coordination point for substrate. Positions 312 to 715 (HDVKQAAVLG…MAKNGQRFFN (404 aa)) are 3-hydroxyacyl-CoA dehydrogenase. Residues Met325, Asp344, 401–403 (VVE), Lys408, and Ser430 each bind NAD(+). His451 functions as the For 3-hydroxyacyl-CoA dehydrogenase activity in the catalytic mechanism. Asn454 is a binding site for NAD(+). Substrate is bound by residues Asn501 and Tyr660.

This sequence in the N-terminal section; belongs to the enoyl-CoA hydratase/isomerase family. In the C-terminal section; belongs to the 3-hydroxyacyl-CoA dehydrogenase family. As to quaternary structure, heterotetramer of two alpha chains (FadB) and two beta chains (FadA).

It catalyses the reaction a (3S)-3-hydroxyacyl-CoA + NAD(+) = a 3-oxoacyl-CoA + NADH + H(+). It carries out the reaction a (3S)-3-hydroxyacyl-CoA = a (2E)-enoyl-CoA + H2O. The enzyme catalyses a 4-saturated-(3S)-3-hydroxyacyl-CoA = a (3E)-enoyl-CoA + H2O. The catalysed reaction is (3S)-3-hydroxybutanoyl-CoA = (3R)-3-hydroxybutanoyl-CoA. It catalyses the reaction a (3Z)-enoyl-CoA = a 4-saturated (2E)-enoyl-CoA. It carries out the reaction a (3E)-enoyl-CoA = a 4-saturated (2E)-enoyl-CoA. Its pathway is lipid metabolism; fatty acid beta-oxidation. Its function is as follows. Involved in the aerobic and anaerobic degradation of long-chain fatty acids via beta-oxidation cycle. Catalyzes the formation of 3-oxoacyl-CoA from enoyl-CoA via L-3-hydroxyacyl-CoA. It can also use D-3-hydroxyacyl-CoA and cis-3-enoyl-CoA as substrate. The sequence is that of Fatty acid oxidation complex subunit alpha from Pseudomonas entomophila (strain L48).